The primary structure comprises 112 residues: Colipase (112 aa).

Positions 1 to 17 are cleaved as a signal peptide; that stretch reads MKVLVVLLVTLVAVAYA. A propeptide spans 18–22 (enterostatin, activation peptide); it reads APGPR. Disulfide bonds link C34–C45, C40–C56, C44–C78, C66–C86, and C80–C104.

Belongs to the colipase family. Forms a 1:1 stoichiometric complex with pancreatic lipase. Expressed by the pancreas.

It is found in the secreted. Its function is as follows. Colipase is a cofactor of pancreatic lipase. It allows the lipase to anchor itself to the lipid-water interface. Without colipase the enzyme is washed off by bile salts, which have an inhibitory effect on the lipase. Enterostatin has a biological activity as a satiety signal. The protein is Colipase of Rattus norvegicus (Rat).